Here is a 953-residue protein sequence, read N- to C-terminus: Zinc finger protein 618 (953 aa).

N-acetylmethionine is present on Met-1. The segment at 1 to 56 (MSQPDGAAAPQVDGASAPGRKSAVNRERLKRSQKSSKVEGPEPVPAEASLSAEQGT) is disordered. Residues Lys-63 and Lys-81 each participate in a glycyl lysine isopeptide (Lys-Gly) (interchain with G-Cter in SUMO2) cross-link. 2 C2H2-type zinc fingers span residues 146–168 (YECG…VRAH) and 187–209 (YTCD…RDLH). Lys-238 participates in a covalent cross-link: Glycyl lysine isopeptide (Lys-Gly) (interchain with G-Cter in SUMO2). Residues 255 to 277 (YTCEFCGKQYKYYTPYQEHVALH) form a C2H2-type 3 zinc finger. Disordered regions lie at residues 283 to 305 (APGW…EVTP) and 337 to 390 (TPPA…SSEP). Polar residues predominate over residues 339–354 (PATQTQTFRAPNSGSP). Residues 365-379 (FSRRVESKAQNHFEE) are compositionally biased toward basic and acidic residues. A C2H2-type 4 zinc finger spans residues 391–413 (YTCGACGIQFQFYSNLLEHMQSH). Residues 419-428 (NNITSNQSRS) are compositionally biased toward polar residues. The segment at 419–461 (NNITSNQSRSPPAAVEEKWKPQAQRNSANNTTTSGLTPNSVIP) is disordered. A Glycyl lysine isopeptide (Lys-Gly) (interchain with G-Cter in SUMO2) cross-link involves residue Lys-436. The segment covering 441–458 (AQRNSANNTTTSGLTPNS) has biased composition (polar residues).

This sequence belongs to the krueppel C2H2-type zinc-finger protein family. As to quaternary structure, interacts with UHRF2.

It localises to the nucleus. Its subcellular location is the chromosome. In terms of biological role, regulates UHRF2 function as a specific 5-hydroxymethylcytosine (5hmC) reader by regulating its chromatin localization. This Mus musculus (Mouse) protein is Zinc finger protein 618 (Znf618).